The chain runs to 407 residues: Phosphopentomutase (407 aa).

Asp11, Asp305, His310, Asp346, His347, and His358 together coordinate Mn(2+).

This sequence belongs to the phosphopentomutase family. Mn(2+) serves as cofactor.

It localises to the cytoplasm. It catalyses the reaction 2-deoxy-alpha-D-ribose 1-phosphate = 2-deoxy-D-ribose 5-phosphate. The catalysed reaction is alpha-D-ribose 1-phosphate = D-ribose 5-phosphate. Its pathway is carbohydrate degradation; 2-deoxy-D-ribose 1-phosphate degradation; D-glyceraldehyde 3-phosphate and acetaldehyde from 2-deoxy-alpha-D-ribose 1-phosphate: step 1/2. Isomerase that catalyzes the conversion of deoxy-ribose 1-phosphate (dRib-1-P) and ribose 1-phosphate (Rib-1-P) to deoxy-ribose 5-phosphate (dRib-5-P) and ribose 5-phosphate (Rib-5-P), respectively. The protein is Phosphopentomutase of Legionella pneumophila (strain Corby).